The chain runs to 247 residues: Eukaryotic translation initiation factor 6 (247 aa).

A phosphoserine; by CK1 mark is found at serine 174 and serine 175.

It belongs to the eIF-6 family. In terms of assembly, monomer. Associates with the 60S ribosomal subunit. Post-translationally, phosphorylation at Ser-174 and Ser-175 promotes nuclear export.

It localises to the cytoplasm. It is found in the nucleus. The protein localises to the nucleolus. Functionally, binds to the 60S ribosomal subunit and prevents its association with the 40S ribosomal subunit to form the 80S initiation complex in the cytoplasm. Is also involved in ribosome biogenesis. Associates with pre-60S subunits in the nucleus and is involved in its nuclear export. In Emericella nidulans (strain FGSC A4 / ATCC 38163 / CBS 112.46 / NRRL 194 / M139) (Aspergillus nidulans), this protein is Eukaryotic translation initiation factor 6 (tif6).